The sequence spans 1113 residues: Carbamoyl phosphate synthase large chain (1113 aa).

The interval 1–407 (MPKRSDINHV…ALNKALRSLE (407 aa)) is carboxyphosphate synthetic domain. Positions 134, 174, 180, 181, 213, 215, 220, 246, 247, 248, 290, and 304 each coordinate ATP. The ATP-grasp 1 domain maps to 138–333 (KDIVTTIGGE…IAKMAAKLAI (196 aa)). Gln-290, Glu-304, and Asn-306 together coordinate Mg(2+). Mn(2+) contacts are provided by Gln-290, Glu-304, and Asn-306. The oligomerization domain stretch occupies residues 408–565 (TKQQGFWTKP…ELDPAAESEV (158 aa)). Residues 566-967 (APQTEREKVL…AYAKAEAGAF (402 aa)) form a carbamoyl phosphate synthetic domain region. The ATP-grasp 2 domain maps to 695 to 886 (GALLNREQLP…LAKAASRIAV (192 aa)). 10 residues coordinate ATP: Arg-731, Arg-770, Leu-772, Glu-777, Gly-802, Ile-803, His-804, Ser-805, Gln-845, and Glu-857. Residues Gln-845, Glu-857, and Asn-859 each coordinate Mg(2+). Mn(2+) is bound by residues Gln-845, Glu-857, and Asn-859. The region spanning 968–1113 (GALPTEGTVF…LQELDHAVKA (146 aa)) is the MGS-like domain. Residues 968 to 1113 (GALPTEGTVF…LQELDHAVKA (146 aa)) are allosteric domain.

This sequence belongs to the CarB family. In terms of assembly, composed of two chains; the small (or glutamine) chain promotes the hydrolysis of glutamine to ammonia, which is used by the large (or ammonia) chain to synthesize carbamoyl phosphate. Tetramer of heterodimers (alpha,beta)4. It depends on Mg(2+) as a cofactor. Requires Mn(2+) as cofactor.

It catalyses the reaction hydrogencarbonate + L-glutamine + 2 ATP + H2O = carbamoyl phosphate + L-glutamate + 2 ADP + phosphate + 2 H(+). The enzyme catalyses hydrogencarbonate + NH4(+) + 2 ATP = carbamoyl phosphate + 2 ADP + phosphate + 2 H(+). It functions in the pathway amino-acid biosynthesis; L-arginine biosynthesis; carbamoyl phosphate from bicarbonate: step 1/1. Its pathway is pyrimidine metabolism; UMP biosynthesis via de novo pathway; (S)-dihydroorotate from bicarbonate: step 1/3. Large subunit of the glutamine-dependent carbamoyl phosphate synthetase (CPSase). CPSase catalyzes the formation of carbamoyl phosphate from the ammonia moiety of glutamine, carbonate, and phosphate donated by ATP, constituting the first step of 2 biosynthetic pathways, one leading to arginine and/or urea and the other to pyrimidine nucleotides. The large subunit (synthetase) binds the substrates ammonia (free or transferred from glutamine from the small subunit), hydrogencarbonate and ATP and carries out an ATP-coupled ligase reaction, activating hydrogencarbonate by forming carboxy phosphate which reacts with ammonia to form carbamoyl phosphate. The chain is Carbamoyl phosphate synthase large chain from Corynebacterium glutamicum (strain ATCC 13032 / DSM 20300 / JCM 1318 / BCRC 11384 / CCUG 27702 / LMG 3730 / NBRC 12168 / NCIMB 10025 / NRRL B-2784 / 534).